The chain runs to 324 residues: MELLPHEKQVVEYEKTIAEFKEKNKENSLLSSSEIQKLDKRLDRLKEKIYSDLTPWERVQICRHPSRPRTVNYIEGMCEEFVELCGDRTFRDDPAVVGGFAKIQGQRFMLIGQEKGCDTKSRMHRNFGMLCPEGFRKALRLAKMAEKFGLPIIFLVDTPGAFPGLTAEERGQGWAIATNLFELARLATPIIVIVIGEGCSGGALGMAIGDVVAMLEHSYYSVISPEGCASILWKDPKKNSDAAAMLKMHGEDLKGFAIVDAVIKEPIGGAHHNPAATYRSVQEYVLQEWVKLKDLPVEELLEKRYQKFRTIGLYETSSESDSEA.

A CoA carboxyltransferase C-terminal domain is found at 37 to 291; the sequence is KLDKRLDRLK…QEYVLQEWVK (255 aa).

The protein belongs to the AccA family. Acetyl-CoA carboxylase is a heterohexamer composed of biotin carboxyl carrier protein (AccB), biotin carboxylase (AccC) and two subunits each of ACCase subunit alpha (AccA) and ACCase subunit beta (AccD).

The protein resides in the cytoplasm. The enzyme catalyses N(6)-carboxybiotinyl-L-lysyl-[protein] + acetyl-CoA = N(6)-biotinyl-L-lysyl-[protein] + malonyl-CoA. It participates in lipid metabolism; malonyl-CoA biosynthesis; malonyl-CoA from acetyl-CoA: step 1/1. Functionally, component of the acetyl coenzyme A carboxylase (ACC) complex. First, biotin carboxylase catalyzes the carboxylation of biotin on its carrier protein (BCCP) and then the CO(2) group is transferred by the carboxyltransferase to acetyl-CoA to form malonyl-CoA. This is Acetyl-coenzyme A carboxylase carboxyl transferase subunit alpha from Chlamydia trachomatis serovar L2 (strain ATCC VR-902B / DSM 19102 / 434/Bu).